A 282-amino-acid chain; its full sequence is Bifunctional protein FolD 2 (282 aa).

NADP(+) contacts are provided by residues 165 to 167 (GRS) and S190.

The protein belongs to the tetrahydrofolate dehydrogenase/cyclohydrolase family. Homodimer.

The catalysed reaction is (6R)-5,10-methylene-5,6,7,8-tetrahydrofolate + NADP(+) = (6R)-5,10-methenyltetrahydrofolate + NADPH. It carries out the reaction (6R)-5,10-methenyltetrahydrofolate + H2O = (6R)-10-formyltetrahydrofolate + H(+). The protein operates within one-carbon metabolism; tetrahydrofolate interconversion. Catalyzes the oxidation of 5,10-methylenetetrahydrofolate to 5,10-methenyltetrahydrofolate and then the hydrolysis of 5,10-methenyltetrahydrofolate to 10-formyltetrahydrofolate. This is Bifunctional protein FolD 2 from Acinetobacter baylyi (strain ATCC 33305 / BD413 / ADP1).